The primary structure comprises 278 residues: S-formylglutathione hydrolase YeiG (278 aa).

Catalysis depends on charge relay system residues Ser-145, Asp-223, and His-256.

This sequence belongs to the esterase D family.

The catalysed reaction is S-formylglutathione + H2O = formate + glutathione + H(+). In terms of biological role, serine hydrolase involved in the detoxification of formaldehyde. Hydrolyzes S-formylglutathione to glutathione and formate. This chain is S-formylglutathione hydrolase YeiG (yeiG), found in Escherichia coli (strain UTI89 / UPEC).